Here is a 96-residue protein sequence, read N- to C-terminus: UPF0235 protein KPK_0722 (96 aa).

This sequence belongs to the UPF0235 family.

This chain is UPF0235 protein KPK_0722, found in Klebsiella pneumoniae (strain 342).